A 393-amino-acid chain; its full sequence is Mitogen-activated protein kinase 10 (393 aa).

One can recognise a Protein kinase domain in the interval lysine 60–leucine 345. ATP contacts are provided by residues isoleucine 66 to valine 74 and lysine 89. The Proton acceptor role is filled by aspartate 186. Residue threonine 218 is modified to Phosphothreonine. Positions threonine 218 to tyrosine 220 match the TXY motif. The residue at position 220 (tyrosine 220) is a Phosphotyrosine. Residue threonine 223 is modified to Phosphothreonine.

This sequence belongs to the protein kinase superfamily. CMGC Ser/Thr protein kinase family. MAP kinase subfamily. Interacts with MKK2. Dually phosphorylated on Thr-218 and Tyr-220, which activates the enzyme.

The catalysed reaction is L-seryl-[protein] + ATP = O-phospho-L-seryl-[protein] + ADP + H(+). The enzyme catalyses L-threonyl-[protein] + ATP = O-phospho-L-threonyl-[protein] + ADP + H(+). Its activity is regulated as follows. Activated by threonine and tyrosine phosphorylation. This Arabidopsis thaliana (Mouse-ear cress) protein is Mitogen-activated protein kinase 10 (MPK10).